A 431-amino-acid chain; its full sequence is Glucose-1-phosphate adenylyltransferase (431 aa).

Lys39 serves as a coordination point for beta-D-fructose 1,6-bisphosphate. Arg40, His46, and Arg52 together coordinate AMP. Tyr114 lines the alpha-D-glucose 1-phosphate pocket. Arg130 is an AMP binding site. Alpha-D-glucose 1-phosphate-binding positions include Gly179, 194-195 (EK), and Ser212. Residues Glu370 and Arg386 each contribute to the AMP site. Residues 419–423 (REMLR) and 429–431 (QER) contribute to the beta-D-fructose 1,6-bisphosphate site.

The protein belongs to the bacterial/plant glucose-1-phosphate adenylyltransferase family. In terms of assembly, homotetramer.

It carries out the reaction alpha-D-glucose 1-phosphate + ATP + H(+) = ADP-alpha-D-glucose + diphosphate. Its pathway is glycan biosynthesis; glycogen biosynthesis. With respect to regulation, allosterically activated by fructose-1,6-bisphosphate (F16BP) and inhibited by AMP. In terms of biological role, involved in the biosynthesis of ADP-glucose, a building block required for the elongation reactions to produce glycogen. Catalyzes the reaction between ATP and alpha-D-glucose 1-phosphate (G1P) to produce pyrophosphate and ADP-Glc. The chain is Glucose-1-phosphate adenylyltransferase from Salmonella dublin (strain CT_02021853).